The following is a 564-amino-acid chain: Bifunctional sesquiterpene synthase 1 (564 aa).

Mg(2+) is bound by residues D317, D321, D461, and E469. The DDXXD motif signature appears at 317-321 (DDTFD).

The protein belongs to the terpene synthase family. Mg(2+) is required as a cofactor.

The catalysed reaction is (2E,6E)-farnesyl diphosphate = alpha-copaene + diphosphate. It catalyses the reaction (2E,6E)-farnesyl diphosphate = delta-cadinene + diphosphate. The protein operates within secondary metabolite biosynthesis; terpenoid biosynthesis. In terms of biological role, sesquiterpene synthase converting farnesyl diphosphate to alpha copaene and delta-cadinene as the major products. The polypeptide is Bifunctional sesquiterpene synthase 1 (Phyla dulcis (Aztec sweet herb)).